The sequence spans 345 residues: Isocitrate/homoisocitrate dehydrogenase (345 aa).

69-71 (TTT) is an NADH binding site. Positions 86, 96, 111, 118, 163, and 165 each coordinate (2R,3S)-homoisocitrate. Asn165 serves as a coordination point for NADH. Mg(2+) contacts are provided by Asp194, Asp218, and Asp222. NADH is bound by residues 251–255 (GSAPD) and Asn263.

It belongs to the isocitrate and isopropylmalate dehydrogenases family. Requires Mn(2+) as cofactor. It depends on Mg(2+) as a cofactor.

It catalyses the reaction D-threo-isocitrate + NAD(+) = 2-oxoglutarate + CO2 + NADH. The enzyme catalyses (2R,3S)-homoisocitrate + NAD(+) = 2-oxoadipate + CO2 + NADH. It functions in the pathway amino-acid biosynthesis; L-lysine biosynthesis via AAA pathway; L-alpha-aminoadipate from 2-oxoglutarate: step 4/5. Catalyzes the NAD(+)-dependent oxidative decarboxylation of homoisocitrate to 2-oxoadipate (alpha-ketoadipate), and of isocitrate to 2-oxoglutarate, at near equal efficiency. May thus play a dual role in glutamate and lysine biosynthesis in vivo. Preferentially uses NAD over NADP. This is Isocitrate/homoisocitrate dehydrogenase from Pyrococcus horikoshii (strain ATCC 700860 / DSM 12428 / JCM 9974 / NBRC 100139 / OT-3).